A 259-amino-acid polypeptide reads, in one-letter code: MINPIALKCGPLAIHWYALCILSGLVLAVYLASKEAPKKGISSDAIFDFILIAFPLAIVGARIYYVIFEWSYYVKHLDEIIAIWNGGIAIYGGLITGALVLLAYCYNKVLNPIHFLDIAAPSVMAAQAIGRWGNFINQEAYGKAVSQLNYLPSFIQKQMFIEGSYRIPTFLYESFWNLLGFVIIMMWRRKPKSLLDGEIFAFYLIWYGSGRLVIEGMRTDSLMFLGIRISQYVSALLIIIGLIFVIKRRRQKGISYYQE.

A run of 4 helical transmembrane segments spans residues 12-32 (LAIHWYALCILSGLVLAVYLA), 41-61 (ISSDAIFDFILIAFPLAIVGA), 80-100 (IIAIWNGGIAIYGGLITGALV), and 109-129 (VLNPIHFLDIAAPSVMAAQAI). Residue Arg-131 participates in a 1,2-diacyl-sn-glycero-3-phospho-(1'-sn-glycerol) binding. 3 helical membrane-spanning segments follow: residues 167–187 (IPTFLYESFWNLLGFVIIMMW), 194–214 (LLDGEIFAFYLIWYGSGRLVI), and 226–246 (GIRISQYVSALLIIIGLIFVI).

The protein belongs to the Lgt family.

It localises to the cell membrane. The enzyme catalyses L-cysteinyl-[prolipoprotein] + a 1,2-diacyl-sn-glycero-3-phospho-(1'-sn-glycerol) = an S-1,2-diacyl-sn-glyceryl-L-cysteinyl-[prolipoprotein] + sn-glycerol 1-phosphate + H(+). The protein operates within protein modification; lipoprotein biosynthesis (diacylglyceryl transfer). Its function is as follows. Catalyzes the transfer of the diacylglyceryl group from phosphatidylglycerol to the sulfhydryl group of the N-terminal cysteine of a prolipoprotein, the first step in the formation of mature lipoproteins. This is Phosphatidylglycerol--prolipoprotein diacylglyceryl transferase from Streptococcus pyogenes serotype M3 (strain ATCC BAA-595 / MGAS315).